Here is a 191-residue protein sequence, read N- to C-terminus: Probable chemoreceptor glutamine deamidase CheD (191 aa).

Belongs to the CheD family.

It catalyses the reaction L-glutaminyl-[protein] + H2O = L-glutamyl-[protein] + NH4(+). Functionally, probably deamidates glutamine residues to glutamate on methyl-accepting chemotaxis receptors (MCPs), playing an important role in chemotaxis. This chain is Probable chemoreceptor glutamine deamidase CheD, found in Hydrogenovibrio crunogenus (strain DSM 25203 / XCL-2) (Thiomicrospira crunogena).